Consider the following 465-residue polypeptide: SET domain-containing protein 3 (465 aa).

The SET domain occupies 18–265 (DKVTVKWDKK…AREELLDSYG (248 aa)).

This sequence belongs to the class V-like SAM-binding methyltransferase superfamily.

The protein is SET domain-containing protein 3 (set-3) of Caenorhabditis elegans.